The chain runs to 642 residues: Threonine--tRNA ligase (642 aa).

The 61-residue stretch at 1 to 61 (MPVITLPDGS…ESDAQLAIIT (61 aa)) folds into the TGS domain. Residues 243–534 (DHRKIGKQLD…LTEEYAGFFP (292 aa)) form a catalytic region. Residues cysteine 334, histidine 385, and histidine 511 each coordinate Zn(2+).

The protein belongs to the class-II aminoacyl-tRNA synthetase family. In terms of assembly, homodimer. Zn(2+) is required as a cofactor.

The protein resides in the cytoplasm. The enzyme catalyses tRNA(Thr) + L-threonine + ATP = L-threonyl-tRNA(Thr) + AMP + diphosphate + H(+). Its function is as follows. Catalyzes the attachment of threonine to tRNA(Thr) in a two-step reaction: L-threonine is first activated by ATP to form Thr-AMP and then transferred to the acceptor end of tRNA(Thr). Also edits incorrectly charged L-seryl-tRNA(Thr). The sequence is that of Threonine--tRNA ligase from Yersinia enterocolitica serotype O:8 / biotype 1B (strain NCTC 13174 / 8081).